A 673-amino-acid chain; its full sequence is UvrABC system protein B (673 aa).

Residues 26 to 183 enclose the Helicase ATP-binding domain; sequence EGLEDGLAHQ…RRLAELQYTR (158 aa). Position 39 to 46 (39 to 46) interacts with ATP; sequence GVTGSGKT. The Beta-hairpin signature appears at 92-115; sequence YYDYYQPEAYVPSSDTFIEKDASV. The Helicase C-terminal domain maps to 431-597; the sequence is QVDDLLSEIR…GLNKKVVDIL (167 aa). One can recognise a UVR domain in the interval 633-668; the sequence is QQKIHELEGQMMQHAQNLEFEEAAEIRDQLHQLREL.

It belongs to the UvrB family. Forms a heterotetramer with UvrA during the search for lesions. Interacts with UvrC in an incision complex.

The protein resides in the cytoplasm. Its function is as follows. The UvrABC repair system catalyzes the recognition and processing of DNA lesions. A damage recognition complex composed of 2 UvrA and 2 UvrB subunits scans DNA for abnormalities. Upon binding of the UvrA(2)B(2) complex to a putative damaged site, the DNA wraps around one UvrB monomer. DNA wrap is dependent on ATP binding by UvrB and probably causes local melting of the DNA helix, facilitating insertion of UvrB beta-hairpin between the DNA strands. Then UvrB probes one DNA strand for the presence of a lesion. If a lesion is found the UvrA subunits dissociate and the UvrB-DNA preincision complex is formed. This complex is subsequently bound by UvrC and the second UvrB is released. If no lesion is found, the DNA wraps around the other UvrB subunit that will check the other stand for damage. The sequence is that of UvrABC system protein B from Citrobacter koseri (strain ATCC BAA-895 / CDC 4225-83 / SGSC4696).